Consider the following 272-residue polypeptide: Glutamate racemase (272 aa).

Substrate is bound by residues 10-11 (DS) and 42-43 (YG). Catalysis depends on C74, which acts as the Proton donor/acceptor. A substrate-binding site is contributed by 75–76 (NT). Residue C185 is the Proton donor/acceptor of the active site. A substrate-binding site is contributed by 186-187 (TH).

This sequence belongs to the aspartate/glutamate racemases family.

It catalyses the reaction L-glutamate = D-glutamate. The protein operates within cell wall biogenesis; peptidoglycan biosynthesis. In terms of biological role, provides the (R)-glutamate required for cell wall biosynthesis. This is Glutamate racemase from Bacillus pumilus (strain SAFR-032).